A 432-amino-acid polypeptide reads, in one-letter code: Pentatricopeptide repeat-containing protein 2, mitochondrial (432 aa).

A mitochondrion-targeting transit peptide spans 1–33; that stretch reads MQFIKRTFPRRAFVDLLLNRFCLREFATTYSVS. PPR repeat units lie at residues 108 to 142, 143 to 179, 360 to 394, and 395 to 429; these read KTVA…QQKP, SDHT…VTAS, NLQV…GPFP, and TQQT…NVPV.

The protein resides in the mitochondrion. Functionally, mitochondrial RNA-binding protein that acts as a general translation factor. Plays a critical role in the synthesis of all mitochondrial DNA-encoded oxidative phosphorylation subunits, which are essential for mitochondrial respiration. Essential for the expression of iron-sulfur cluster (ISC) proteins as well as other heme proteins related to iron-sensing, and thus plays a key role in iron homeostasis. This chain is Pentatricopeptide repeat-containing protein 2, mitochondrial, found in Schizosaccharomyces pombe (strain 972 / ATCC 24843) (Fission yeast).